We begin with the raw amino-acid sequence, 313 residues long: Phosphoenolpyruvate phosphomutase (313 aa).

D69 (nucleophile) is an active-site residue.

It belongs to the isocitrate lyase/PEP mutase superfamily. PEP mutase family.

The catalysed reaction is phosphoenolpyruvate + H(+) = 3-phosphonopyruvate. The protein operates within secondary metabolite biosynthesis; bialaphos biosynthesis. Its function is as follows. Formation of a carbon-phosphorus bond by converting phosphoenolpyruvate (PEP) to phosphonopyruvate (P-Pyr). The sequence is that of Phosphoenolpyruvate phosphomutase (bcpB) from Streptomyces hygroscopicus.